Here is a 167-residue protein sequence, read N- to C-terminus: Urease accessory protein UreE (167 aa).

Residues 137-167 are disordered; that stretch reads ARGAYHAHGGHSHGHDHGHSHGHDHHDHSHD. The segment covering 149-167 has biased composition (basic and acidic residues); sequence HGHDHGHSHGHDHHDHSHD.

The protein belongs to the UreE family.

The protein localises to the cytoplasm. Its function is as follows. Involved in urease metallocenter assembly. Binds nickel. Probably functions as a nickel donor during metallocenter assembly. This is Urease accessory protein UreE from Rhizobium rhizogenes (strain K84 / ATCC BAA-868) (Agrobacterium radiobacter).